Reading from the N-terminus, the 214-residue chain is Guanylate kinase (214 aa).

Residues 6–192 form the Guanylate kinase-like domain; it reads GTLYIISAPS…ALEDLKAIFR (187 aa). Position 13–20 (13–20) interacts with ATP; the sequence is APSGAGKT.

The protein belongs to the guanylate kinase family.

Its subcellular location is the cytoplasm. It catalyses the reaction GMP + ATP = GDP + ADP. Its function is as follows. Essential for recycling GMP and indirectly, cGMP. This chain is Guanylate kinase, found in Pseudomonas syringae pv. syringae (strain B728a).